Reading from the N-terminus, the 283-residue chain is Non-selective voltage-gated ion channel VDAC3 (283 aa).

At C2 the chain carries N-acetylcysteine. T4 bears the Phosphothreonine mark. N6-acetyllysine is present on residues K12, K15, and K20. 2 beta stranded membrane-spanning segments follow: residues 26–35 (MVKIDLRTKS) and 39–47 (VEFSTSGHA). K53 is covalently cross-linked (Glycyl lysine isopeptide (Lys-Gly) (interchain with G-Cter in ubiquitin)). 3 beta stranded membrane passes run 54–64 (ASGNLETKYKI), 69–76 (LTFTQKWN), and 80–89 (TLGTEISLEN). K90 carries the N6-acetyllysine modification. The chain crosses the membrane as a beta stranded span at residues 95 to 104 (LKLTLDTIFV). Residues K109 and K110 each participate in a glycyl lysine isopeptide (Lys-Gly) (interchain with G-Cter in ubiquitin) cross-link. Transmembrane regions (beta stranded) follow at residues 111-120 (SGKLKASYKR), 123-130 (FSIGSNVD), 137-145 (TIYGWAVLA), 150-158 (LAGYQMSFD), 163-175 (KLSQ…GYKA), 178-185 (FQLHTHVN), 189-198 (EFGGSIYQKV), 202-211 (IETSINLAWT), 218-227 (RFGIAAKYKL), and 231-238 (TSLSAKVN). S241 is subject to Phosphoserine. Residues 242 to 244 (LIG) and 260 to 264 (SALID) each bind NAD(+). 2 consecutive transmembrane segments (beta stranded) span residues 242-251 (LIGLGYTQTL) and 254-263 (GVKLTLSALI). The residue at position 266 (K266) is an N6-acetyllysine; alternate. K266 participates in a covalent cross-link: Glycyl lysine isopeptide (Lys-Gly) (interchain with G-Cter in ubiquitin); alternate. Residues 273–282 (HKVGLGFELE) form a beta stranded membrane-spanning segment.

The protein belongs to the eukaryotic mitochondrial porin family. As to quaternary structure, interacts with ARMC12 in a TBC1D21-dependent manner. Interacts with MISFA. Ubiquitinated by PRKN during mitophagy, leading to its degradation and enhancement of mitophagy. Deubiquitinated by USP30.

It is found in the mitochondrion outer membrane. It localises to the membrane. The enzyme catalyses chloride(in) = chloride(out). It catalyses the reaction K(+)(in) = K(+)(out). Functionally, non-selective voltage-gated ion channel that mediates the transport of anions and cations through the mitochondrion outer membrane and plasma membrane. Forms a high-conducting channel with a stable open state and a voltage-induced closure with a mild preference for anions over cations. Involved in male fertility and sperm mitochondrial sheath formation. The chain is Non-selective voltage-gated ion channel VDAC3 from Sus scrofa (Pig).